The primary structure comprises 98 residues: NADH-ubiquinone oxidoreductase chain 4L (98 aa).

Transmembrane regions (helical) follow at residues 1-21 (MSLI…GLLM), 26-46 (LMSA…FTTL), and 61-81 (IILL…LVMI).

Belongs to the complex I subunit 4L family. As to quaternary structure, core subunit of respiratory chain NADH dehydrogenase (Complex I) which is composed of 45 different subunits.

It localises to the mitochondrion inner membrane. The enzyme catalyses a ubiquinone + NADH + 5 H(+)(in) = a ubiquinol + NAD(+) + 4 H(+)(out). Core subunit of the mitochondrial membrane respiratory chain NADH dehydrogenase (Complex I) which catalyzes electron transfer from NADH through the respiratory chain, using ubiquinone as an electron acceptor. Part of the enzyme membrane arm which is embedded in the lipid bilayer and involved in proton translocation. In Physeter macrocephalus (Sperm whale), this protein is NADH-ubiquinone oxidoreductase chain 4L (MT-ND4L).